Consider the following 205-residue polypeptide: Calcium-binding allergen Bet v 3 (205 aa).

Positions 1–26 are disordered; that stretch reads MPCSTEAMEKAGHGHASTPRKRSLSN. EF-hand domains are found at residues 36–71, 72–107, 130–165, and 168–203; these read LNTLRLRRIFDLFDKNSDGIITVDELSRALNLLGLE, TDLSELESTVKSFTREGNIGLQFEDFISLHQSLNDS, QEEADSFGGFKVFDEDGDGYISARELQMVLGKLGFS, and SEIDRVEKMIVSVDSNRDGRVDFFEFKDMMRSVLVR. Ca(2+) contacts are provided by aspartate 49, asparagine 51, aspartate 53, and glutamate 60. Residues aspartate 143, aspartate 145, aspartate 147, tyrosine 149, glutamate 154, aspartate 181, asparagine 183, aspartate 185, arginine 187, and glutamate 192 each coordinate Ca(2+).

Could be involved in calcium metabolism in pollen. Binds 3 calcium ions. This is Calcium-binding allergen Bet v 3 (BETVIII) from Betula pendula (European white birch).